The chain runs to 267 residues: Zinc finger protein ZAT1 (267 aa).

Residues 5–27 (HKCKLCWKSFANGRALGGHMRSH) form a C2H2-type 1 zinc finger. 2 disordered regions span residues 34–99 (PSQP…ADIK) and 181–204 (SHKKKIAETDQLGSDELKKKKKKS). Positions 52–62 (QDRESETESSK) are enriched in basic and acidic residues. Residues 63–73 (KPSRKRSRLNR) show a composition bias toward basic residues. Over residues 83–97 (QSNEEGKSETARAAD) the composition is skewed to basic and acidic residues. 2 consecutive C2H2-type zinc fingers follow at residues 160 to 182 (FECETCEKVFKSYQALGGHRASH) and 209 to 231 (HECPICAKVFTSGQALGGHKRSH).

The protein resides in the nucleus. Functionally, probable transcription factor that may be involved in stress responses. The chain is Zinc finger protein ZAT1 (ZAT1) from Arabidopsis thaliana (Mouse-ear cress).